The chain runs to 1015 residues: Frequency clock protein (1015 aa).

8 disordered regions span residues 1 to 138 (MQPT…SADD), 183 to 285 (KRKK…QKVD), 352 to 383 (DFSP…TFSS), 402 to 465 (HVAG…DPDR), 544 to 614 (GRKI…VSAS), 629 to 668 (SPNE…NRRK), 706 to 728 (ERPD…GSSI), and 895 to 1015 (SEDD…SSQG). Residues 49–68 (SAPPNDSNENSSSPRRASSG) are compositionally biased toward low complexity. The segment covering 69–80 (ESHETGQSDAKK) has biased composition (basic and acidic residues). A compositionally biased stretch (polar residues) spans 82–95 (FNQSNQNPTATFDS). Basic and acidic residues predominate over residues 107–117 (KESDSSNEDKP). Composition is skewed to low complexity over residues 203 to 216 (SPNT…STTK), 228 to 267 (SGSG…SGTS), and 356 to 368 (QQQQ…QQQQ). A compositionally biased stretch (polar residues) spans 369–383 (PKSNFITNPGATFSS). The segment covering 431–442 (NSSSNGNDSGTN) has biased composition (low complexity). The span at 443-453 (PSPPMPPPPEQ) shows a compositional bias: pro residues. Residues 454–465 (RPTRPRDLDPDR) are compositionally biased toward basic and acidic residues. Residues 556-570 (TKFSSESSGDLSQRS) are compositionally biased toward polar residues. The Nuclear localization signal motif lies at 584–588 (HKRQK). Low complexity predominate over residues 590 to 600 (GHSTGDSGSSG). Over residues 629 to 643 (SPNEQSSMEDGTLSS) the composition is skewed to polar residues. Composition is skewed to acidic residues over residues 895–909 (SEDD…EFNS) and 934–946 (SGDE…EDDI). The span at 976–1003 (GSSRGRSNSASAEAVLRAGGSSAATAGG) shows a compositional bias: low complexity.

It belongs to the FRQ family.

It localises to the nucleus. Functionally, circadian clock component involved in the generation of biological rhythms, in particular in rhythm stability, period length, and temperature compensation. Behaves as a negative element in circadian transcriptional loop. This Trichoderma spinulosum (Hypocrea spinulosa) protein is Frequency clock protein (FRQ).